We begin with the raw amino-acid sequence, 49 residues long: Large ribosomal subunit protein bL33 (49 aa).

It belongs to the bacterial ribosomal protein bL33 family.

The protein is Large ribosomal subunit protein bL33 of Streptococcus gordonii (strain Challis / ATCC 35105 / BCRC 15272 / CH1 / DL1 / V288).